A 376-amino-acid chain; its full sequence is MSKAVLVLEDGRVFTGRPFGATGQALGEAVFSTGMSGYQETLTDPSYHRQIVVATAPQIGNTGWNGEDSESRGERIWVAGYAVRDPSPRASNWRATGTLEDELIRQRIVGIAGIDTRGVVRHLRSRGSMKAGVFSDGALAEPADLIARVRAQQSMLGADLAGEVSTAEPYVVEPDGPPGVSRFTVAALDLGIKTNTPRNFARRGIRCHVLPASTTFEQIAELNPHGVFLSNGPGDPATADHVVALTREVLGAGIPLFGICFGNQILGRALGLSTYKMVFGHRGINIPVVDHATGRVAVTAQNHGFALQGEAGQSFATPFGPAVVSHTCANDGVVEGVKLVDGRAFSVQYHPEAAAGPHDAEYLFDQFVELMAGEGR.

The segment at 1 to 183 is CPSase; that stretch reads MSKAVLVLED…PDGPPGVSRF (183 aa). 3 residues coordinate L-glutamine: serine 46, glycine 232, and glycine 234. Residues 184–376 form the Glutamine amidotransferase type-1 domain; the sequence is TVAALDLGIK…FVELMAGEGR (193 aa). Cysteine 260 (nucleophile) is an active-site residue. The L-glutamine site is built by phenylalanine 261, glutamine 264, asparagine 302, glycine 304, and phenylalanine 305. Active-site residues include histidine 350 and glutamate 352.

The protein belongs to the CarA family. As to quaternary structure, composed of two chains; the small (or glutamine) chain promotes the hydrolysis of glutamine to ammonia, which is used by the large (or ammonia) chain to synthesize carbamoyl phosphate. Tetramer of heterodimers (alpha,beta)4.

The catalysed reaction is hydrogencarbonate + L-glutamine + 2 ATP + H2O = carbamoyl phosphate + L-glutamate + 2 ADP + phosphate + 2 H(+). The enzyme catalyses L-glutamine + H2O = L-glutamate + NH4(+). It participates in amino-acid biosynthesis; L-arginine biosynthesis; carbamoyl phosphate from bicarbonate: step 1/1. It functions in the pathway pyrimidine metabolism; UMP biosynthesis via de novo pathway; (S)-dihydroorotate from bicarbonate: step 1/3. In terms of biological role, small subunit of the glutamine-dependent carbamoyl phosphate synthetase (CPSase). CPSase catalyzes the formation of carbamoyl phosphate from the ammonia moiety of glutamine, carbonate, and phosphate donated by ATP, constituting the first step of 2 biosynthetic pathways, one leading to arginine and/or urea and the other to pyrimidine nucleotides. The small subunit (glutamine amidotransferase) binds and cleaves glutamine to supply the large subunit with the substrate ammonia. This is Carbamoyl phosphate synthase small chain from Mycobacterium bovis (strain ATCC BAA-935 / AF2122/97).